Reading from the N-terminus, the 133-residue chain is Small ribosomal subunit protein uS12 (133 aa).

Asp89 carries the post-translational modification 3-methylthioaspartic acid. A disordered region spans residues 103-133 (DTAGVAGRTQRRSKYGAKRPKPGQAAPAKKK). Residues 111–123 (TQRRSKYGAKRPK) are compositionally biased toward basic residues. The span at 124 to 133 (PGQAAPAKKK) shows a compositional bias: low complexity.

This sequence belongs to the universal ribosomal protein uS12 family. Part of the 30S ribosomal subunit. Contacts proteins S8 and S17. May interact with IF1 in the 30S initiation complex.

With S4 and S5 plays an important role in translational accuracy. Functionally, interacts with and stabilizes bases of the 16S rRNA that are involved in tRNA selection in the A site and with the mRNA backbone. Located at the interface of the 30S and 50S subunits, it traverses the body of the 30S subunit contacting proteins on the other side and probably holding the rRNA structure together. The combined cluster of proteins S8, S12 and S17 appears to hold together the shoulder and platform of the 30S subunit. The sequence is that of Small ribosomal subunit protein uS12 from Bacteroides thetaiotaomicron (strain ATCC 29148 / DSM 2079 / JCM 5827 / CCUG 10774 / NCTC 10582 / VPI-5482 / E50).